We begin with the raw amino-acid sequence, 601 residues long: Beta-phellandrene synthase (601 aa).

The transit peptide at 1–35 (MSTISIHHVGILRNPLPSKNKRALINNPWSLSLPR) directs the protein to the chloroplast. Positions 356 and 360 each coordinate Mn(2+). Positions 356–360 (DDVYD) match the DDXXD motif motif. 2 homodimerization regions span residues 362 to 368 (YGTLDEL) and 434 to 471 (EAEW…LSIP). The Mn(2+) site is built by Asp-499 and Glu-507.

It belongs to the terpene synthase family. Homodimer. Mn(2+) serves as cofactor. Requires Mg(2+) as cofactor. In terms of tissue distribution, expressed in peltate glandular trichomes. Present at low levels in flowers and stems.

The protein resides in the plastid. Its subcellular location is the chloroplast. It carries out the reaction (2E)-geranyl diphosphate = beta-phellandrene + diphosphate. The enzyme catalyses (2E)-geranyl diphosphate = (1R,5R)-sabinene + diphosphate. It participates in secondary metabolite biosynthesis; terpenoid biosynthesis. Functionally, involved in the biosynthesis of phenolic monoterpenes natural products. Monoterpene synthase that catalyzes mainly the formation of olefins such as sabinene and beta-phellandrene, and minor amounts of other monoterpenes (e.g. myrcene, gamma-terpinene, alpha-thujene and alpha-pinene) from geranyl diphosphate (GPP). The sequence is that of Beta-phellandrene synthase from Origanum vulgare (Wild marjoram).